We begin with the raw amino-acid sequence, 275 residues long: Large ribosomal subunit protein uL2 (275 aa).

The segment covering 38 to 53 (NSKAGRNNNGRITTRH) has biased composition (polar residues). 2 disordered regions span residues 38–59 (NSKAGRNNNGRITTRHQGGGHK) and 224–257 (AMNPIDHPHGGGEGRTAAGRDPVSPWGTPTKGFR).

Belongs to the universal ribosomal protein uL2 family. As to quaternary structure, part of the 50S ribosomal subunit. Forms a bridge to the 30S subunit in the 70S ribosome.

Its function is as follows. One of the primary rRNA binding proteins. Required for association of the 30S and 50S subunits to form the 70S ribosome, for tRNA binding and peptide bond formation. It has been suggested to have peptidyltransferase activity; this is somewhat controversial. Makes several contacts with the 16S rRNA in the 70S ribosome. The sequence is that of Large ribosomal subunit protein uL2 from Burkholderia thailandensis (strain ATCC 700388 / DSM 13276 / CCUG 48851 / CIP 106301 / E264).